We begin with the raw amino-acid sequence, 729 residues long: E3 ubiquitin-protein ligase SH3RF2 (729 aa).

The segment at 12 to 53 (CPVCFEKLDVTAKVLPCQHTFCKPCLQRVFKAHKELRCPECR) adopts an RING-type zinc-finger fold. The disordered stretch occupies residues 78 to 105 (SGQSSGRGGSFRRPGTMTLQDGRKSRTN). SH3 domains are found at residues 125 to 184 (DGVP…VIKQ) and 187 to 252 (QPPP…PNLT). The interval 258 to 297 (EKNKGRQSSRTKNLSLVSSSSRGNTSTLRRGPGSRRKVPG) is disordered. Residues 263–285 (RQSSRTKNLSLVSSSSRGNTSTL) show a composition bias toward polar residues. Residues 370-459 (VVSLPGSQQH…RSPGLYTTWT (90 aa)) are interaction with PAK4. The SH3 3 domain occupies 380-441 (LSANMFVALH…PNNYVIPIFR (62 aa)). Disordered stretches follow at residues 497–526 (STAGPGTLGQGSLRKGRSSMRKNGSLQRPL) and 610–677 (KSEP…SQPE). Residues 517–526 (RKNGSLQRPL) are compositionally biased toward polar residues. Residues 641–646 (KTVRFQ) form an interaction with PPP1CA region. Position 649 is a phosphoserine (S649).

Belongs to the SH3RF family. Interacts with FASLG and PPP1CA. Interacts with PAK4 and TNFRSF1A. Interacts with DLK1, MAP3K10/MLK2, MAPK8IP1/JIP1, MAPK8IP2/JIP2 and MAPK8IP3/JIP3. Interacts with RAC1 (both active GTP- or inactive GDP-bound forms). Post-translationally, autoubiquitinated. Heart (at protein level). Up-regulated in colon cancer tissues as compared to normal colon tissues (at protein level). Testis. In the heart, present in the apex, left atrium, right atrium, left ventricle and right ventricle, but not in the aorta.

It is found in the nucleus. The catalysed reaction is S-ubiquitinyl-[E2 ubiquitin-conjugating enzyme]-L-cysteine + [acceptor protein]-L-lysine = [E2 ubiquitin-conjugating enzyme]-L-cysteine + N(6)-ubiquitinyl-[acceptor protein]-L-lysine.. The protein operates within protein modification; protein ubiquitination. Functionally, has E3 ubiquitin-protein ligase activity. Acts as an anti-apoptotic regulator of the JNK pathway by ubiquitinating and promoting the degradation of SH3RF1, a scaffold protein that is required for pro-apoptotic JNK activation. Facilitates TNF-alpha-mediated recruitment of adapter proteins TRADD and RIPK1 to TNFRSF1A and regulates PAK4 protein stability via inhibition of its ubiquitin-mediated proteasomal degradation. Inhibits PPP1CA phosphatase activity. In Homo sapiens (Human), this protein is E3 ubiquitin-protein ligase SH3RF2 (SH3RF2).